We begin with the raw amino-acid sequence, 304 residues long: Pseudouridine-5'-phosphate glycosidase (304 aa).

Glu-25 acts as the Proton donor in catalysis. Substrate contacts are provided by Lys-86 and Val-106. Asp-138 lines the Mn(2+) pocket. Residue 140 to 142 participates in substrate binding; the sequence is SAD. Lys-159 acts as the Nucleophile in catalysis.

Belongs to the pseudouridine-5'-phosphate glycosidase family. Homotrimer. It depends on Mn(2+) as a cofactor.

It catalyses the reaction D-ribose 5-phosphate + uracil = psi-UMP + H2O. Its function is as follows. Catalyzes the reversible cleavage of pseudouridine 5'-phosphate (PsiMP) to ribose 5-phosphate and uracil. Functions biologically in the cleavage direction, as part of a pseudouridine degradation pathway. This Lysinibacillus sphaericus (strain C3-41) protein is Pseudouridine-5'-phosphate glycosidase.